Here is a 549-residue protein sequence, read N- to C-terminus: Efflux pump patC (549 aa).

The span at 1–12 shows a compositional bias: polar residues; it reads MAESTAHTSPSL. The tract at residues 1–40 is disordered; sequence MAESTAHTSPSLNDKEREVDQGILSDESGPAEEVKETPDQ. Helical transmembrane passes span 50 to 70, 85 to 105, 116 to 136, 146 to 166, 178 to 198, 206 to 226, 252 to 272, 282 to 302, 321 to 341, 360 to 380, 385 to 405, 419 to 439, 460 to 482, and 526 to 546; these read LLIC…NTIV, AQLG…ILPL, WLFI…GGAP, VWAG…ITIL, LVGL…GAFA, WGFY…VFLL, VLSA…GVMW, LYVV…FCVL, IALY…VYYI, LLPF…LMPK, VLWY…MYTV, ILLG…PSLV, LLGL…NALL, and VYVM…FLPW.

The protein belongs to the major facilitator superfamily. TCR/Tet family.

Its subcellular location is the vacuole membrane. It is found in the cell membrane. Functionally, efflux pump; part of the gene cluster that mediates the biosynthesis of patulin, an acetate-derived tetraketide mycotoxin produced by several fungal species that shows antimicrobial properties against several bacteria. May be involved in the secretion of E-ascladiol to be converted to patulin by the secreted patulin synthase patE. This Aspergillus clavatus (strain ATCC 1007 / CBS 513.65 / DSM 816 / NCTC 3887 / NRRL 1 / QM 1276 / 107) protein is Efflux pump patC.